The primary structure comprises 664 residues: Cyclic nucleotide-gated channel alpha-2 (664 aa).

Residues 1–20 (MTEKSNGVKSSPANNHNNHV) are compositionally biased toward polar residues. The interval 1–49 (MTEKSNGVKSSPANNHNNHVPATIKANGKDESRTRSRPQSAADDDTSSE) is disordered. At 1-144 (MTEKSNGVKS…PAGDWYYRWL (144 aa)) the chain is on the cytoplasmic side. A helical membrane pass occupies residues 145–166 (FVIAMPVLYNWCLLVARACFSD). At 167–176 (LQRGYFLVWL) the chain is on the extracellular side. The helical transmembrane segment at 177 to 197 (VLDYFSDVVYIADLFIRLRTG) threads the bilayer. Residues 198-222 (FLEQGLLVKDPKKLRDNYIHTLQFK) lie on the Cytoplasmic side of the membrane. A helical transmembrane segment spans residues 223–241 (LDVASIIPTDLIYFAVGIH). Residues 242 to 246 (NPELR) lie on the Extracellular side of the membrane. A helical membrane pass occupies residues 247-265 (FNRLLHFARMFEFFDRTET). Over 266-272 (RTSYPNI) the chain is Cytoplasmic. The tract at residues 270–378 (PNIFRISNLV…GNVGSMISNM (109 aa)) is ion conduction pathway. Residues 273 to 296 (FRISNLVLYILVIIHWNACIYYAI) form a helical membrane-spanning segment. Residues 297-319 (SKSIGFGVDTWVYPNITDPEYGY) are Extracellular-facing. Helical transmembrane passes span 320–354 (LARE…LFVI) and 355–379 (FDFL…SNMN). Residues 337–340 (TIGE) form a selectivity filter region. Positions 380-456 (ATRAEFQAKI…STLKKVRIFQ (77 aa)) are C-linker. Residues 380-664 (ATRAEFQAKI…SPEPAAAEQP (285 aa)) lie on the Cytoplasmic side of the membrane. Residues 460–580 (AGLLVELVLK…EERGREILMK (121 aa)) form a cyclic nucleotide-binding domain region. 3',5'-cyclic GMP contacts are provided by Gly520, Ser523, Arg536, and Thr537. Residues Arg536 and Thr537 each coordinate 3',5'-cyclic AMP. Residues 597 to 651 (VQEKLKQLETNMETLYTRFGRLLAEYTGAQQKLKQRITVLEVKMKQNTEDDYLSD) adopt a coiled-coil conformation. The segment at 644 to 664 (TEDDYLSDGMNSPEPAAAEQP) is disordered.

This sequence belongs to the cyclic nucleotide-gated cation channel (TC 1.A.1.5) family. CNGA2 subfamily. In terms of assembly, the olfactory cyclic nucleotide-gated channel is an heterotetramer composed of CNGA2, CNGA4 and CNGB1b subunits with 2:1:1 stoichiometry.

The protein localises to the cell projection. Its subcellular location is the cilium membrane. The enzyme catalyses Ca(2+)(in) = Ca(2+)(out). The catalysed reaction is Na(+)(in) = Na(+)(out). It catalyses the reaction K(+)(in) = K(+)(out). It carries out the reaction NH4(+)(in) = NH4(+)(out). The enzyme catalyses Rb(+)(in) = Rb(+)(out). The catalysed reaction is Li(+)(in) = Li(+)(out). It catalyses the reaction Cs(+)(in) = Cs(+)(out). In terms of biological role, pore-forming subunit of the olfactory cyclic nucleotide-gated channel. Operates in the cilia of olfactory sensory neurons where chemical stimulation of the odorant is converted to an electrical signal. Mediates odorant-induced cAMP-dependent Ca(2+) influx triggering neuron depolarization. The rise of intracellular Ca(2+) levels potentiates the olfactory response by activating Ca(2+)-dependent Cl(-) channels, but it also serves as a negative feedback signal to desensitize the channel for rapid adaptation to odorants. Conducts cAMP- and cGMP-gated ion currents, with permeability for monovalent and divalent cations. In Oryctolagus cuniculus (Rabbit), this protein is Cyclic nucleotide-gated channel alpha-2.